Consider the following 704-residue polypeptide: Methionine--tRNA ligase (704 aa).

The 'HIGH' region signature appears at 17–27 (PYANGPIHLGH). Zn(2+) contacts are provided by cysteine 148, cysteine 151, cysteine 161, and cysteine 164. Residues 348–352 (KMSKS) carry the 'KMSKS' region motif. Lysine 351 contributes to the ATP binding site. In terms of domain architecture, tRNA-binding spans 603 to 704 (ELSKVELRVG…KDAKPGDRLK (102 aa)).

The protein belongs to the class-I aminoacyl-tRNA synthetase family. MetG type 1 subfamily. Homodimer. It depends on Zn(2+) as a cofactor.

The protein resides in the cytoplasm. The enzyme catalyses tRNA(Met) + L-methionine + ATP = L-methionyl-tRNA(Met) + AMP + diphosphate. Its function is as follows. Is required not only for elongation of protein synthesis but also for the initiation of all mRNA translation through initiator tRNA(fMet) aminoacylation. The protein is Methionine--tRNA ligase of Leptospira borgpetersenii serovar Hardjo-bovis (strain L550).